We begin with the raw amino-acid sequence, 353 residues long: Chorismate synthase (353 aa).

Residues Arg-48 and Arg-54 each coordinate NADP(+). FMN-binding positions include 125 to 127 (RSS), 238 to 239 (NA), Gly-278, 293 to 297 (KPTSS), and Arg-319.

It belongs to the chorismate synthase family. As to quaternary structure, homotetramer. The cofactor is FMNH2.

It catalyses the reaction 5-O-(1-carboxyvinyl)-3-phosphoshikimate = chorismate + phosphate. Its pathway is metabolic intermediate biosynthesis; chorismate biosynthesis; chorismate from D-erythrose 4-phosphate and phosphoenolpyruvate: step 7/7. Its function is as follows. Catalyzes the anti-1,4-elimination of the C-3 phosphate and the C-6 proR hydrogen from 5-enolpyruvylshikimate-3-phosphate (EPSP) to yield chorismate, which is the branch point compound that serves as the starting substrate for the three terminal pathways of aromatic amino acid biosynthesis. This reaction introduces a second double bond into the aromatic ring system. The polypeptide is Chorismate synthase (Bordetella bronchiseptica (strain ATCC BAA-588 / NCTC 13252 / RB50) (Alcaligenes bronchisepticus)).